Here is a 168-residue protein sequence, read N- to C-terminus: MVKDILAPGLRVVFCGINPGLSSANTGFPFAHPANRFWKVIHLAGFTDRQLKPEEAEKLLDFRCGVTKLVDRPTVQATEVKLHELRSGGRNLIEKIEDYQPAALAVLGKQAFEQGFSQRGIAWGKQKIAIGATMVWVLPNPSGLNRIKTEKLVEAYRELDQALIMRGL.

The protein belongs to the uracil-DNA glycosylase (UDG) superfamily. TDG/mug family. Binds DNA as a monomer.

The protein localises to the cytoplasm. The enzyme catalyses Specifically hydrolyzes mismatched double-stranded DNA and polynucleotides, releasing free uracil.. Excises ethenocytosine and uracil, which can arise by alkylation or deamination of cytosine, respectively, from the corresponding mispairs with guanine in ds-DNA. It is capable of hydrolyzing the carbon-nitrogen bond between the sugar-phosphate backbone of the DNA and the mispaired base. The complementary strand guanine functions in substrate recognition. Required for DNA damage lesion repair in stationary-phase cells. This is G/U mismatch-specific DNA glycosylase from Salmonella agona (strain SL483).